The following is a 470-amino-acid chain: GTPase Der (470 aa).

EngA-type G domains lie at 32-195 (PVVA…PTIS) and 206-379 (RRVA…KSWD). Residues 38–45 (GRPNVGKS), 85–89 (DTGGW), 147–150 (NKVD), 212–219 (GKPNVGKS), 259–263 (DTAGL), and 324–327 (NKWD) each bind GTP. Residues 380–462 (TRVSTGRLNT…PIRINVRVRE (83 aa)) enclose the KH-like domain.

It belongs to the TRAFAC class TrmE-Era-EngA-EngB-Septin-like GTPase superfamily. EngA (Der) GTPase family. Associates with the 50S ribosomal subunit.

Its function is as follows. GTPase that plays an essential role in the late steps of ribosome biogenesis. The polypeptide is GTPase Der (Mycolicibacterium vanbaalenii (strain DSM 7251 / JCM 13017 / BCRC 16820 / KCTC 9966 / NRRL B-24157 / PYR-1) (Mycobacterium vanbaalenii)).